Reading from the N-terminus, the 953-residue chain is UvrABC system protein A (953 aa).

Position 33–40 (33–40 (GLSGSGKS)) interacts with ATP. ABC transporter domains are found at residues 320–599 (WGST…EESI) and 619–949 (GHDN…RYLK). 652-659 (GVSGSGKS) is a binding site for ATP. A C4-type zinc finger spans residues 752 to 778 (CEACQGDGLIKIEMHFLPDVYVKCDIC).

This sequence belongs to the ABC transporter superfamily. UvrA family. Forms a heterotetramer with UvrB during the search for lesions.

The protein localises to the cytoplasm. In terms of biological role, the UvrABC repair system catalyzes the recognition and processing of DNA lesions. UvrA is an ATPase and a DNA-binding protein. A damage recognition complex composed of 2 UvrA and 2 UvrB subunits scans DNA for abnormalities. When the presence of a lesion has been verified by UvrB, the UvrA molecules dissociate. The protein is UvrABC system protein A of Rickettsia bellii (strain RML369-C).